The following is a 217-amino-acid chain: uncharacterized protein (217 aa).

The interval 1–32 (MTLKKHRGKMSEKSNVNKKFTNSTQNNSNWSN) is disordered. Low complexity predominate over residues 22–32 (NSTQNNSNWSN).

This is an uncharacterized protein from Acidianus filamentous virus 2 (isolate Italy/Pozzuoli) (AFV-2).